Consider the following 138-residue polypeptide: ATP synthase epsilon chain (138 aa).

Belongs to the ATPase epsilon chain family. F-type ATPases have 2 components, CF(1) - the catalytic core - and CF(0) - the membrane proton channel. CF(1) has five subunits: alpha(3), beta(3), gamma(1), delta(1), epsilon(1). CF(0) has three main subunits: a, b and c.

It is found in the cell inner membrane. Produces ATP from ADP in the presence of a proton gradient across the membrane. This chain is ATP synthase epsilon chain, found in Verminephrobacter eiseniae (strain EF01-2).